The chain runs to 522 residues: Thiamine biosynthetic bifunctional enzyme TH1, chloroplastic (522 aa).

A chloroplast-targeting transit peptide spans 1–36 (MNSLGGIRSWPANWRSTTASMTTTESVRKVPQVLTV). Residues 345–349 (QLREK) and asparagine 377 contribute to the 4-amino-2-methyl-5-(diphosphooxymethyl)pyrimidine site. Mg(2+) contacts are provided by aspartate 378 and aspartate 397. Serine 416 serves as a coordination point for 4-amino-2-methyl-5-(diphosphooxymethyl)pyrimidine. 2-[(2R,5Z)-2-carboxy-4-methylthiazol-5(2H)-ylidene]ethyl phosphate is bound at residue 442–444 (TNT). Position 445 (lysine 445) interacts with 4-amino-2-methyl-5-(diphosphooxymethyl)pyrimidine. 2-[(2R,5Z)-2-carboxy-4-methylthiazol-5(2H)-ylidene]ethyl phosphate contacts are provided by residues glycine 472 and 495–496 (VS).

It belongs to the thiamine-phosphate synthase family. Mg(2+) serves as cofactor.

It localises to the plastid. The protein localises to the chloroplast. The catalysed reaction is 2-[(2R,5Z)-2-carboxy-4-methylthiazol-5(2H)-ylidene]ethyl phosphate + 4-amino-2-methyl-5-(diphosphooxymethyl)pyrimidine + 2 H(+) = thiamine phosphate + CO2 + diphosphate. The enzyme catalyses 2-(2-carboxy-4-methylthiazol-5-yl)ethyl phosphate + 4-amino-2-methyl-5-(diphosphooxymethyl)pyrimidine + 2 H(+) = thiamine phosphate + CO2 + diphosphate. It catalyses the reaction 4-methyl-5-(2-phosphooxyethyl)-thiazole + 4-amino-2-methyl-5-(diphosphooxymethyl)pyrimidine + H(+) = thiamine phosphate + diphosphate. It carries out the reaction 4-amino-5-hydroxymethyl-2-methylpyrimidine + ATP = 4-amino-2-methyl-5-(phosphooxymethyl)pyrimidine + ADP + H(+). Its pathway is cofactor biosynthesis; thiamine diphosphate biosynthesis; thiamine phosphate from 4-amino-2-methyl-5-diphosphomethylpyrimidine and 4-methyl-5-(2-phosphoethyl)-thiazole: step 1/1. The protein operates within cofactor biosynthesis; thiamine diphosphate biosynthesis; 4-amino-2-methyl-5-diphosphomethylpyrimidine from 5-amino-1-(5-phospho-D-ribosyl)imidazole: step 2/3. Essential for thiamine biosynthesis. Bifunctional enzyme that catalyzes the phosphorylation of hydroxymethylpyrimidine phosphate (HMP-P) to HMP-PP and condenses 4-methyl-5-(beta-hydroxyethyl)thiazole monophosphate (THZ-P) and 2-methyl-4-amino-5-hydroxymethyl pyrimidine pyrophosphate (HMP-PP) to form thiamine monophosphate (TMP). The sequence is that of Thiamine biosynthetic bifunctional enzyme TH1, chloroplastic (TH1) from Arabidopsis thaliana (Mouse-ear cress).